An 85-amino-acid polypeptide reads, in one-letter code: Toxin To6 (85 aa).

The signal sequence occupies residues 1 to 20; the sequence is MSIFPIILALLLIGLDEGEA. In terms of domain architecture, LCN-type CS-alpha/beta spans 21–83; it reads LDGYPLSKNN…EMYPGRLPCN (63 aa). 4 cysteine pairs are disulfide-bonded: Cys-32–Cys-82, Cys-36–Cys-59, Cys-42–Cys-64, and Cys-46–Cys-66.

In terms of tissue distribution, expressed by the venom gland.

It localises to the secreted. Its function is as follows. Beta toxins bind voltage-independently at site-4 of sodium channels (Nav) and shift the voltage of activation toward more negative potentials thereby affecting sodium channel activation and promoting spontaneous and repetitive firing. The polypeptide is Toxin To6 (Tityus obscurus (Amazonian scorpion)).